Reading from the N-terminus, the 436-residue chain is 3-ketoacyl-CoA thiolase (436 aa).

The active-site Acyl-thioester intermediate is the Cys-99. Active-site proton acceptor residues include His-392 and Cys-422.

Belongs to the thiolase-like superfamily. Thiolase family. Heterotetramer of two alpha chains (FadJ) and two beta chains (FadI).

Its subcellular location is the cytoplasm. The catalysed reaction is an acyl-CoA + acetyl-CoA = a 3-oxoacyl-CoA + CoA. It participates in lipid metabolism; fatty acid beta-oxidation. In terms of biological role, catalyzes the final step of fatty acid oxidation in which acetyl-CoA is released and the CoA ester of a fatty acid two carbons shorter is formed. This is 3-ketoacyl-CoA thiolase from Shewanella baltica (strain OS155 / ATCC BAA-1091).